Reading from the N-terminus, the 151-residue chain is Probable cGMP 3',5'-cyclic phosphodiesterase subunit delta (151 aa).

It belongs to the PDE6D/unc-119 family. As to quaternary structure, interacts with Pde6.

The protein localises to the nucleus. Its subcellular location is the cytoplasm. This is Probable cGMP 3',5'-cyclic phosphodiesterase subunit delta from Anopheles gambiae (African malaria mosquito).